Consider the following 363-residue polypeptide: Src kinase-associated phosphoprotein 1 (363 aa).

The disordered stretch occupies residues 62-94 (PFPSDYKEEDGSDDNRSSSLGRSAQSDDASLAS). Residues 84–94 (SAQSDDASLAS) are compositionally biased toward low complexity. In terms of domain architecture, PH spans 118 to 221 (NVLKQGYLEK…WVDQIKIVLR (104 aa)). Positions 227-273 (VIPVDDEEEEEEEEETYDDIEGEGGPPLPQPLSGTWGRGGDTGAADE) are disordered. Acidic residues predominate over residues 230–248 (VDDEEEEEEEEETYDDIEG). An SH3 domain is found at 301-362 (EYANYYQGLW…PKDFLHPAYI (62 aa)).

This sequence belongs to the SKAP family. As to quaternary structure, homodimer. Post-translationally, phosphorylated on tyrosines.

The protein resides in the cytoplasm. The protein localises to the nucleus. It localises to the cell membrane. Its function is as follows. Positively regulates T-cell receptor signaling. Required for optimal conjugation between T-cells and antigen-presenting cells. In Takifugu rubripes (Japanese pufferfish), this protein is Src kinase-associated phosphoprotein 1 (skap1).